Consider the following 225-residue polypeptide: Octanoyltransferase (225 aa).

The BPL/LPL catalytic domain occupies 37–217; the sequence is SDTPDEFWVV…ELASLIGYQT (181 aa). Residues 76–83, 148–150, and 161–163 each bind substrate; these read RGGQVTYH, SLG, and GLA. The active-site Acyl-thioester intermediate is the C179.

This sequence belongs to the LipB family.

Its subcellular location is the cytoplasm. It catalyses the reaction octanoyl-[ACP] + L-lysyl-[protein] = N(6)-octanoyl-L-lysyl-[protein] + holo-[ACP] + H(+). It functions in the pathway protein modification; protein lipoylation via endogenous pathway; protein N(6)-(lipoyl)lysine from octanoyl-[acyl-carrier-protein]: step 1/2. Catalyzes the transfer of endogenously produced octanoic acid from octanoyl-acyl-carrier-protein onto the lipoyl domains of lipoate-dependent enzymes. Lipoyl-ACP can also act as a substrate although octanoyl-ACP is likely to be the physiological substrate. The chain is Octanoyltransferase from Aeromonas salmonicida (strain A449).